The primary structure comprises 376 residues: Probable allantoicase (376 aa).

It belongs to the allantoicase family.

It catalyses the reaction allantoate + H2O = (S)-ureidoglycolate + urea. The protein operates within nitrogen metabolism; (S)-allantoin degradation; (S)-ureidoglycolate from allantoate (aminidohydrolase route): step 1/1. This chain is Probable allantoicase, found in Streptomyces coelicolor (strain ATCC BAA-471 / A3(2) / M145).